The chain runs to 63 residues: SSKWEACCDRCACTKSIPPQCHCADIRLNSCHSACESCACTHSIPAQCRCFDITDFCYKPCSG.

Disulfide bonds link Cys-7–Cys-61, Cys-8–Cys-23, Cys-11–Cys-57, Cys-13–Cys-21, Cys-31–Cys-38, Cys-35–Cys-50, and Cys-40–Cys-48.

Belongs to the Bowman-Birk serine protease inhibitor family. In terms of assembly, exists as a dimer in its native form.

In terms of biological role, inhibits trypsin, chymotrypsin, plasmin and factor XIIa. Does not inhibit factor Xa, thrombin, human plasma kallikrein, porcine pancreatic kallikrein and human urinary kallikrein. The polypeptide is Bowman-birk type proteinase inhibitor 2 (Amburana cearensis (Cerejeira)).